Consider the following 840-residue polypeptide: Translation initiation factor IF-2 (840 aa).

Basic and acidic residues predominate over residues Arg-95–Arg-143. Disordered stretches follow at residues Arg-95 to Gly-155 and Pro-173 to Pro-256. Residues Ala-144–Gly-155 show a composition bias toward low complexity. 2 stretches are compositionally biased toward basic and acidic residues: residues Ala-175–Asp-191 and Ser-223–Arg-232. A compositionally biased stretch (basic residues) spans Arg-233 to Gln-247. Positions Thr-340–Lys-509 constitute a tr-type G domain. Residues Gly-349 to Thr-356 are G1. Gly-349–Thr-356 is a GTP binding site. The G2 stretch occupies residues Gly-374 to His-378. Positions Asp-395 to Gly-398 are G3. Residues Asp-395 to His-399 and Asn-449 to Asp-452 each bind GTP. Residues Asn-449–Asp-452 are G4. The segment at Ser-485–Lys-487 is G5.

Belongs to the TRAFAC class translation factor GTPase superfamily. Classic translation factor GTPase family. IF-2 subfamily.

It is found in the cytoplasm. In terms of biological role, one of the essential components for the initiation of protein synthesis. Protects formylmethionyl-tRNA from spontaneous hydrolysis and promotes its binding to the 30S ribosomal subunits. Also involved in the hydrolysis of GTP during the formation of the 70S ribosomal complex. The protein is Translation initiation factor IF-2 of Pseudomonas aeruginosa (strain ATCC 15692 / DSM 22644 / CIP 104116 / JCM 14847 / LMG 12228 / 1C / PRS 101 / PAO1).